An 80-amino-acid chain; its full sequence is MAQKSLANNSINLPYKDLTSEVTRRRVTMITRKEIITQKSDEAKEMLSHLDLEQAPPPHRTYLTVPPAPPPSPAEDPTVS.

The disordered stretch occupies residues 53 to 80 (EQAPPPHRTYLTVPPAPPPSPAEDPTVS).

The protein is Myocilin opposite strand protein of Homo sapiens (Human).